The primary structure comprises 386 residues: MLVLVINSGSSSLKYQVRDVASHSVLTEGLIEKIGMGNGGEGDGEIEGPRDHAEALEQVDAAIHEVLGDRTLDAVGHRVVHGGERFGEPVLIDNEITRAIERLNPLAPLHNPANVLGIRAIAKKWPDMPQVAVFDTAFHRTLPEHAWRYAVPDSLYTNHGIRRYGFHGTSHEYVSHQAAALLDLPVEEFDGVIAHLGNGASVTAIRGGKSVDTSMGFTPLEGLVMGTRSGDLDPSILVFLGRAGWSTEDIDSLLNRESGLKGLAGNNDMRSVVEASEAGDARAATALAVASYRLAKYIGGYHVAVGGAKALVFTAGIGENSHLFRALVGDKLGALGVELDAGLNSQRSKEPRVISTAASLIPVLVVPTDEERAIAEATAAVVHSAS.

Residue N7 participates in Mg(2+) binding. Position 14 (K14) interacts with ATP. R78 is a substrate binding site. The active-site Proton donor/acceptor is D135. Residues 195 to 199 (HLGNG), 268 to 270 (DMR), and 316 to 320 (GIGEN) each bind ATP. Mg(2+) is bound at residue E370.

Belongs to the acetokinase family. In terms of assembly, homodimer. The cofactor is Mg(2+). Mn(2+) serves as cofactor.

The protein localises to the cytoplasm. The catalysed reaction is acetate + ATP = acetyl phosphate + ADP. The protein operates within metabolic intermediate biosynthesis; acetyl-CoA biosynthesis; acetyl-CoA from acetate: step 1/2. Functionally, catalyzes the formation of acetyl phosphate from acetate and ATP. Can also catalyze the reverse reaction. The sequence is that of Acetate kinase from Arthrobacter sp. (strain FB24).